The following is a 477-amino-acid chain: MVNTMKTKLLCVLLLCGAVFSLPRQETYRQLARGSRAYGVACRDEKTQMIYQQQESWLRPEVRSKRVEHCRCDRGLAQCHTVPVKSCSELRCFNGGTCWQAASFSDFVCQCPKGYTGKQCEVDTHATCYKDQGVTYRGTWSTSESGAQCINWNSNLLTRRTYNGRRSDAITLGLGNHNYCRNPDNNSKPWCYVIKASKFILEFCSVPVCSKATCGLRKYKEPQLHSTGGLFTDITSHPWQAAIFAQNRRSSGERFLCGGILISSCWVLTAAHCFQERYPPQHLRVVLGRTYRVKPGKEEQTFEVEKCIVHEEFDDDTYNNDIALLQLKSGSPQCAQESDSVRAICLPEANLQLPDWTECELSGYGKHKSSSPFYSEQLKEGHVRLYPSSRCTSKFLFNKTVTNNMLCAGDTRSGEIYPNVHDACQGDSGGPLVCMNDNHMTLLGIISWGVGCGEKDIPGVYTKVTNYLGWIRDNMRP.

An N-terminal signal peptide occupies residues 1–36; sequence MVNTMKTKLLCVLLLCGAVFSLPRQETYRQLARGSR. Residues 40 to 82 form the Fibronectin type-I domain; the sequence is VACRDEKTQMIYQQQESWLRPEVRSKRVEHCRCDRGLAQCHTV. 14 cysteine pairs are disulfide-bonded: cysteine 42–cysteine 72, cysteine 70–cysteine 79, cysteine 87–cysteine 98, cysteine 92–cysteine 109, cysteine 111–cysteine 120, cysteine 128–cysteine 209, cysteine 149–cysteine 191, cysteine 180–cysteine 204, cysteine 214–cysteine 345, cysteine 257–cysteine 273, cysteine 265–cysteine 334, cysteine 359–cysteine 434, cysteine 391–cysteine 407, and cysteine 424–cysteine 452. The EGF-like domain maps to 83 to 121; sequence PVKSCSELRCFNGGTCWQAASFSDFVCQCPKGYTGKQCE. Positions 128–209 constitute a Kringle domain; that stretch reads CYKDQGVTYR…ILEFCSVPVC (82 aa). A glycan (N-linked (GlcNAc...) asparagine) is linked at asparagine 185. In terms of domain architecture, Peptidase S1 spans 226–476; the sequence is STGGLFTDIT…YLGWIRDNMR (251 aa). Residues histidine 272 and aspartate 321 each act as charge relay system in the active site. N-linked (GlcNAc...) asparagine glycosylation occurs at asparagine 398. Catalysis depends on serine 428, which acts as the Charge relay system.

It belongs to the peptidase S1 family. As to quaternary structure, monomer.

The protein resides in the secreted. It carries out the reaction Specific cleavage of Arg-|-Val bond in plasminogen to form plasmin.. With respect to regulation, activity toward plasminogen is stimulated in the presence of fibrin I. Its function is as follows. Probably essential to support the feeding habits of this exclusively haematophagous animal. Probable potent thrombolytic agent. This is Salivary plasminogen activator alpha 2 from Desmodus rotundus (Vampire bat).